Consider the following 102-residue polypeptide: NADH-quinone oxidoreductase subunit K 1 (102 aa).

A run of 3 helical transmembrane segments spans residues 5 to 25, 30 to 50, and 62 to 82; these read LYEV…CVVA, VIMM…TFVG, and VFSL…LAMV.

It belongs to the complex I subunit 4L family. As to quaternary structure, NDH-1 is composed of 14 different subunits. Subunits NuoA, H, J, K, L, M, N constitute the membrane sector of the complex.

Its subcellular location is the cell inner membrane. It catalyses the reaction a quinone + NADH + 5 H(+)(in) = a quinol + NAD(+) + 4 H(+)(out). In terms of biological role, NDH-1 shuttles electrons from NADH, via FMN and iron-sulfur (Fe-S) centers, to quinones in the respiratory chain. The immediate electron acceptor for the enzyme in this species is believed to be ubiquinone. Couples the redox reaction to proton translocation (for every two electrons transferred, four hydrogen ions are translocated across the cytoplasmic membrane), and thus conserves the redox energy in a proton gradient. This is NADH-quinone oxidoreductase subunit K 1 from Citrifermentans bemidjiense (strain ATCC BAA-1014 / DSM 16622 / JCM 12645 / Bem) (Geobacter bemidjiensis).